Consider the following 66-residue polypeptide: Large ribosomal subunit protein uL29 (66 aa).

The protein belongs to the universal ribosomal protein uL29 family.

The chain is Large ribosomal subunit protein uL29 from Thermococcus gammatolerans (strain DSM 15229 / JCM 11827 / EJ3).